We begin with the raw amino-acid sequence, 557 residues long: 2-succinyl-5-enolpyruvyl-6-hydroxy-3-cyclohexene-1-carboxylate synthase (557 aa).

It belongs to the TPP enzyme family. MenD subfamily. Homodimer. It depends on Mg(2+) as a cofactor. Mn(2+) serves as cofactor. Thiamine diphosphate is required as a cofactor.

It carries out the reaction isochorismate + 2-oxoglutarate + H(+) = 5-enolpyruvoyl-6-hydroxy-2-succinyl-cyclohex-3-ene-1-carboxylate + CO2. The protein operates within quinol/quinone metabolism; 1,4-dihydroxy-2-naphthoate biosynthesis; 1,4-dihydroxy-2-naphthoate from chorismate: step 2/7. It participates in quinol/quinone metabolism; menaquinone biosynthesis. Catalyzes the thiamine diphosphate-dependent decarboxylation of 2-oxoglutarate and the subsequent addition of the resulting succinic semialdehyde-thiamine pyrophosphate anion to isochorismate to yield 2-succinyl-5-enolpyruvyl-6-hydroxy-3-cyclohexene-1-carboxylate (SEPHCHC). The polypeptide is 2-succinyl-5-enolpyruvyl-6-hydroxy-3-cyclohexene-1-carboxylate synthase (Staphylococcus aureus (strain MSSA476)).